A 321-amino-acid polypeptide reads, in one-letter code: tRNA U34 carboxymethyltransferase (321 aa).

Carboxy-S-adenosyl-L-methionine-binding positions include Lys90, Trp104, Lys109, Gly129, 151-153 (DPT), 180-181 (IE), Met195, Tyr199, and Arg314.

The protein belongs to the class I-like SAM-binding methyltransferase superfamily. CmoB family. As to quaternary structure, homotetramer.

It catalyses the reaction carboxy-S-adenosyl-L-methionine + 5-hydroxyuridine(34) in tRNA = 5-carboxymethoxyuridine(34) in tRNA + S-adenosyl-L-homocysteine + H(+). Catalyzes carboxymethyl transfer from carboxy-S-adenosyl-L-methionine (Cx-SAM) to 5-hydroxyuridine (ho5U) to form 5-carboxymethoxyuridine (cmo5U) at position 34 in tRNAs. The polypeptide is tRNA U34 carboxymethyltransferase (Haemophilus influenzae (strain 86-028NP)).